Reading from the N-terminus, the 576-residue chain is MTDFPTHFKGPKLNPIKVNPNFFERNPKVARVLQITAVVLGIIALLSGIVLIIGTPLGAPISMILGGCLLASGGALFVGGTIATILQARNSYKKAVNQKKLSEPLMERPELKALDYSLDLKEVWDLHHSVVKHLKKLDLNLSETQREVLNQIKIDDEGPSLGECAAMISENYDACLKMLAYREELLKEQTQYQETRFNQNLTHRNKVLLSILSRITDNISKAGGVFSLKFSTLSSRMSRIHTTTTVILALSAVVSVMVVAALIPGGILALPILLAVAISAGVIVTGLSYLVRQILSNTKRNRQDFYKDFVKNVDIELLNQTVTLQRFLFEMLKGVLKEEEEVSLEGQDWYTQYITNAPIEKRLIEEIRVTYKEIDAQTKKMKTDLEFLENEVRSGRLSVASPSEDPSETPIFTQGKEFAKLRRQTSQNISTIYGPDNENIDPEFSLPWMPKKEEEIDHSLEPVTKLEPGSREELLLVEGVNPTLRELNMRIALLQQQLSSVRKWRHPRGEHYGNVIYSDTELDRIQMLEGAFYNHLREAQEEITQSLGDLVDIQNRILGIIVEGDSDSRTEEEPQE.

It belongs to the chlamydial CPn_0065/CT_288/TC_0561 family.

This is an uncharacterized protein from Chlamydia pneumoniae (Chlamydophila pneumoniae).